A 207-amino-acid chain; its full sequence is Cytochrome c biogenesis ATP-binding export protein CcmA (207 aa).

An ABC transporter domain is found at 4–207 (LEARELLCER…RISLTQTRAA (204 aa)). Position 36-43 (36-43 (GSNGAGKT)) interacts with ATP.

The protein belongs to the ABC transporter superfamily. CcmA exporter (TC 3.A.1.107) family. As to quaternary structure, the complex is composed of two ATP-binding proteins (CcmA) and two transmembrane proteins (CcmB).

Its subcellular location is the cell inner membrane. It carries out the reaction heme b(in) + ATP + H2O = heme b(out) + ADP + phosphate + H(+). Part of the ABC transporter complex CcmAB involved in the biogenesis of c-type cytochromes; once thought to export heme, this seems not to be the case, but its exact role is uncertain. Responsible for energy coupling to the transport system. The chain is Cytochrome c biogenesis ATP-binding export protein CcmA from Shigella sonnei (strain Ss046).